A 395-amino-acid polypeptide reads, in one-letter code: Pyruvate synthase subunit PorA (395 aa).

Heterotetramer of one alpha, one beta, one delta and one gamma chain.

The catalysed reaction is 2 oxidized [2Fe-2S]-[ferredoxin] + pyruvate + CoA = 2 reduced [2Fe-2S]-[ferredoxin] + acetyl-CoA + CO2 + H(+). The protein is Pyruvate synthase subunit PorA (porA) of Pyrococcus horikoshii (strain ATCC 700860 / DSM 12428 / JCM 9974 / NBRC 100139 / OT-3).